Here is a 446-residue protein sequence, read N- to C-terminus: 23S rRNA (uracil(1939)-C(5))-methyltransferase RlmD (446 aa).

A TRAM domain is found at 6–64 (KKLPQESITCEIESLSHEGRGVSHKDGKTLFVEGALPGETVTARYVNSRRSYDELAVEE). Positions 77, 83, 86, and 165 each coordinate [4Fe-4S] cluster. S-adenosyl-L-methionine contacts are provided by Gln-275, Phe-304, Asn-309, Glu-325, Asp-352, and Asp-377. The active-site Nucleophile is the Cys-403.

It belongs to the class I-like SAM-binding methyltransferase superfamily. RNA M5U methyltransferase family. RlmD subfamily.

The catalysed reaction is uridine(1939) in 23S rRNA + S-adenosyl-L-methionine = 5-methyluridine(1939) in 23S rRNA + S-adenosyl-L-homocysteine + H(+). Its function is as follows. Catalyzes the formation of 5-methyl-uridine at position 1939 (m5U1939) in 23S rRNA. The polypeptide is 23S rRNA (uracil(1939)-C(5))-methyltransferase RlmD (Hahella chejuensis (strain KCTC 2396)).